Here is a 303-residue protein sequence, read N- to C-terminus: Sulfate adenylyltransferase subunit 2 (303 aa).

This sequence belongs to the PAPS reductase family. CysD subfamily. Heterodimer composed of CysD, the smaller subunit, and CysN.

The catalysed reaction is sulfate + ATP + H(+) = adenosine 5'-phosphosulfate + diphosphate. It functions in the pathway sulfur metabolism; hydrogen sulfide biosynthesis; sulfite from sulfate: step 1/3. Functionally, with CysN forms the ATP sulfurylase (ATPS) that catalyzes the adenylation of sulfate producing adenosine 5'-phosphosulfate (APS) and diphosphate, the first enzymatic step in sulfur assimilation pathway. APS synthesis involves the formation of a high-energy phosphoric-sulfuric acid anhydride bond driven by GTP hydrolysis by CysN coupled to ATP hydrolysis by CysD. The polypeptide is Sulfate adenylyltransferase subunit 2 (Akkermansia muciniphila (strain ATCC BAA-835 / DSM 22959 / JCM 33894 / BCRC 81048 / CCUG 64013 / CIP 107961 / Muc)).